The sequence spans 677 residues: Histidine ammonia-lyase (677 aa).

The segment at residues 269 to 271 is a cross-link (5-imidazolinone (Cys-Gly)); the sequence is CSG. Ser270 carries the 2,3-didehydroalanine (Ser) modification.

This sequence belongs to the PAL/histidase family. Contains an active site 4-methylidene-imidazol-5-one (MIO), which is formed autocatalytically by cyclization and dehydration of residues Cys-Ser-Gly.

It carries out the reaction L-histidine = trans-urocanate + NH4(+). Its pathway is amino-acid degradation; L-histidine degradation into L-glutamate; N-formimidoyl-L-glutamate from L-histidine: step 1/3. This Caenorhabditis elegans protein is Histidine ammonia-lyase.